The chain runs to 487 residues: 3-octaprenyl-4-hydroxybenzoate carboxy-lyase (487 aa).

Asn172 contacts Mn(2+). Prenylated FMN is bound by residues 175 to 177 (IYR), 189 to 191 (RWL), and 194 to 195 (RG). A Mn(2+)-binding site is contributed by Glu238. The Proton donor role is filled by Asp287.

Belongs to the UbiD family. As to quaternary structure, homohexamer. It depends on prenylated FMN as a cofactor. Mn(2+) serves as cofactor.

The protein localises to the cell membrane. It carries out the reaction a 4-hydroxy-3-(all-trans-polyprenyl)benzoate + H(+) = a 2-(all-trans-polyprenyl)phenol + CO2. Its pathway is cofactor biosynthesis; ubiquinone biosynthesis. Its function is as follows. Catalyzes the decarboxylation of 3-octaprenyl-4-hydroxy benzoate to 2-octaprenylphenol, an intermediate step in ubiquinone biosynthesis. The protein is 3-octaprenyl-4-hydroxybenzoate carboxy-lyase of Nitrosomonas europaea (strain ATCC 19718 / CIP 103999 / KCTC 2705 / NBRC 14298).